The sequence spans 316 residues: Porphobilinogen deaminase (316 aa).

At Cys249 the chain carries S-(dipyrrolylmethanemethyl)cysteine.

This sequence belongs to the HMBS family. In terms of assembly, monomer. The cofactor is dipyrromethane.

The enzyme catalyses 4 porphobilinogen + H2O = hydroxymethylbilane + 4 NH4(+). Its pathway is porphyrin-containing compound metabolism; protoporphyrin-IX biosynthesis; coproporphyrinogen-III from 5-aminolevulinate: step 2/4. Tetrapolymerization of the monopyrrole PBG into the hydroxymethylbilane pre-uroporphyrinogen in several discrete steps. The chain is Porphobilinogen deaminase from Nitrobacter hamburgensis (strain DSM 10229 / NCIMB 13809 / X14).